A 617-amino-acid chain; its full sequence is BTB/POZ domain-containing protein At3g08570 (617 aa).

One can recognise a BTB domain in the interval 36-106; the sequence is GDITIVVDGE…CYGINFEITI (71 aa). The region spanning 210–490 is the NPH3 domain; it reads EWWIEDLSAL…VRVLYSEQLR (281 aa). Y431 is subject to Phosphotyrosine. Disordered stretches follow at residues 505–525 and 585–617; these read LSSQKHSSENPSRAVSPRDTY and GGGPTEGKLRNANRKSKSRLERKTVRSRPESMF. Residues 602–617 show a composition bias toward basic and acidic residues; that stretch reads SRLERKTVRSRPESMF.

The protein belongs to the NPH3 family.

The protein operates within protein modification; protein ubiquitination. In terms of biological role, may act as a substrate-specific adapter of an E3 ubiquitin-protein ligase complex (CUL3-RBX1-BTB) which mediates the ubiquitination and subsequent proteasomal degradation of target proteins. In Arabidopsis thaliana (Mouse-ear cress), this protein is BTB/POZ domain-containing protein At3g08570.